The sequence spans 83 residues: Small cysteine-rich protein 3 (83 aa).

A signal peptide spans 1-21; it reads MGVKLNICLLLLLVAIISSQG. Residues 22–39 constitute a propeptide that is removed on maturation; it reads FNLRKKEDSKDEKPFGNY. The segment covering 25–35 has biased composition (basic and acidic residues); the sequence is RKKEDSKDEKP. The interval 25–44 is disordered; it reads RKKEDSKDEKPFGNYRRGSP.

The protein belongs to the Cnidaria small cysteine-rich protein (SCRiP) family. alpha subfamily. In terms of processing, contains 4 disulfide bonds.

It is found in the secreted. The protein localises to the nematocyst. In terms of biological role, this recombinant protein induces severe neurotoxicity on zebrafish larvae (Danio rerio) at a concentration of 230 mg/ml, but does not show toxicity when injected in blowfly larvae (Sarcophaga falculata). All fish incubated with this protein died within 16 hours of exposure. Has also been claimed to be implied in calcification, but this function seems improbable. In Acropora millepora (Staghorn coral), this protein is Small cysteine-rich protein 3.